We begin with the raw amino-acid sequence, 62 residues long: Small ribosomal subunit protein uS14 (62 aa).

Zn(2+) is bound by residues Cys-25, Cys-28, Cys-41, and Cys-44.

It belongs to the universal ribosomal protein uS14 family. Zinc-binding uS14 subfamily. Part of the 30S ribosomal subunit. Contacts proteins S3 and S10. Requires Zn(2+) as cofactor.

Binds 16S rRNA, required for the assembly of 30S particles and may also be responsible for determining the conformation of the 16S rRNA at the A site. The chain is Small ribosomal subunit protein uS14 from Sulfurihydrogenibium sp. (strain YO3AOP1).